The sequence spans 566 residues: Sister chromatid cohesion protein 1 (566 aa).

Residue Ser-161 is modified to Phosphoserine. Ser-175 carries the post-translational modification Phosphoserine; by CDC5. Lys-210 carries the N6-acetyllysine; by ECO1 modification. Phosphoserine; by CDC5 is present on Ser-263. Position 307 is a phosphoserine (Ser-307). The segment at Ser-325–Gln-356 is disordered. Thr-354 bears the Phosphothreonine mark.

The protein belongs to the rad21 family. As to quaternary structure, interacts directly with IRR1/SCC3 in cohesin complex. Cohesin complexes are composed of the SMC1 and SMC3 heterodimer attached via their hinge domain, MCD1/SCC1 which link them, and IRR1, which interacts with MCD1. The cohesin complex also interacts with SCC2, which is required for its association with chromosomes. In terms of processing, cleaved by ESP1 at the onset of anaphase. Phosphorylated by CDC5/Polo-like kinase at the onset of anaphase. Phosphorylation takes places at proximity to cleavage sites and is required for an efficient cleavage by ESP1. Post-translationally, acetylated by ECO1.

The protein resides in the nucleus. It is found in the chromosome. Its subcellular location is the centromere. In terms of biological role, cleavable component of the cohesin complex involved in chromosome cohesion during cell cycle. The cohesin complex is required for the cohesion of sister chromatids after DNA replication. The cohesin complex apparently forms a large proteinaceous ring within which sister chromatids can be trapped. At metaphase-anaphase transition, this protein is cleaved by ESP1 and dissociates from chromatin, allowing sister chromatids to segregate. In Saccharomyces cerevisiae (strain ATCC 204508 / S288c) (Baker's yeast), this protein is Sister chromatid cohesion protein 1 (MCD1).